Here is a 572-residue protein sequence, read N- to C-terminus: Proline--tRNA ligase (572 aa).

Belongs to the class-II aminoacyl-tRNA synthetase family. ProS type 1 subfamily. Homodimer.

It is found in the cytoplasm. It catalyses the reaction tRNA(Pro) + L-proline + ATP = L-prolyl-tRNA(Pro) + AMP + diphosphate. Its function is as follows. Catalyzes the attachment of proline to tRNA(Pro) in a two-step reaction: proline is first activated by ATP to form Pro-AMP and then transferred to the acceptor end of tRNA(Pro). As ProRS can inadvertently accommodate and process non-cognate amino acids such as alanine and cysteine, to avoid such errors it has two additional distinct editing activities against alanine. One activity is designated as 'pretransfer' editing and involves the tRNA(Pro)-independent hydrolysis of activated Ala-AMP. The other activity is designated 'posttransfer' editing and involves deacylation of mischarged Ala-tRNA(Pro). The misacylated Cys-tRNA(Pro) is not edited by ProRS. In Escherichia coli O7:K1 (strain IAI39 / ExPEC), this protein is Proline--tRNA ligase.